A 146-amino-acid polypeptide reads, in one-letter code: Leghemoglobin 1 (146 aa).

In terms of domain architecture, Globin spans 2-146 (GFTAQQDALV…LAAAIKKAMS (145 aa)). A phosphoserine; by CCAMK mark is found at Ser-13 and Ser-14. Nitrated tyrosine is present on Tyr-30. Phosphoserine; by CCAMK is present on residues Ser-45 and Ser-55. Ser-45 contacts heme b. His-61 provides a ligand contact to O2. Heme b-binding residues include Lys-64, His-93, and Lys-96. Ser-123 is modified (phosphoserine; by CCAMK). Tyr-134 carries the nitrated tyrosine modification.

The protein belongs to the plant globin family. In terms of assembly, monomer. Post-translationally, nitrated in effective nodules and particularly in hypoxic conditions; this mechanism may play a protective role in the symbiosis by buffering toxic peroxynitrite NO(2)(-). Nitration level decrease during nodule senescence. Phosphorylated by CCAMK at serine residues in a Ca(2+)-dependent manner; the phosphorylation at Ser-45 disrupts the molecular environment of its porphyrin ring oxygen binding pocket, thus leading to a reduced oxygen consumption and to the delivery of oxygen O(2) to symbiosomes. Specifically and strongly expressed in root nodules and at low levels in seedlings.

Its subcellular location is the cytoplasm. The protein resides in the cytosol. It is found in the nucleus. In terms of biological role, leghemoglobin that reversibly binds oxygen O(2) through a pentacoordinated heme iron. In root nodules, facilitates the diffusion of oxygen to the bacteroids while preventing the bacterial nitrogenase from being inactivated by buffering dioxygen, nitric oxide and carbon monoxide, and promoting the formation of reactive oxygen species (ROS, e.g. H(2)O(2)). This role is essential for symbiotic nitrogen fixation (SNF). This chain is Leghemoglobin 1, found in Lotus japonicus (Lotus corniculatus var. japonicus).